Reading from the N-terminus, the 111-residue chain is Small ribosomal subunit protein bS16 (111 aa).

It belongs to the bacterial ribosomal protein bS16 family.

In Rickettsia prowazekii (strain Madrid E), this protein is Small ribosomal subunit protein bS16.